The chain runs to 202 residues: Nucleoid occlusion factor SlmA (202 aa).

Residues 14-75 (KERQQQVLEV…ALIERIEQTL (62 aa)) form the HTH tetR-type domain. The segment at residues 38–57 (TTERLAKAVGVSEGALYRYF) is a DNA-binding region (H-T-H motif).

The protein belongs to the nucleoid occlusion factor SlmA family. Homodimer. Interacts with FtsZ.

The protein localises to the cytoplasm. The protein resides in the nucleoid. Its function is as follows. Required for nucleoid occlusion (NO) phenomenon, which prevents Z-ring formation and cell division over the nucleoid. Acts as a DNA-associated cell division inhibitor that binds simultaneously chromosomal DNA and FtsZ, and disrupts the assembly of FtsZ polymers. SlmA-DNA-binding sequences (SBS) are dispersed on non-Ter regions of the chromosome, preventing FtsZ polymerization at these regions. This Haemophilus ducreyi (strain 35000HP / ATCC 700724) protein is Nucleoid occlusion factor SlmA.